The sequence spans 295 residues: Fructose-bisphosphate aldolase class 1 (295 aa).

Residue E176 is the Proton acceptor of the active site. K213 (schiff-base intermediate with dihydroxyacetone-P) is an active-site residue.

The protein belongs to the class I fructose-bisphosphate aldolase family.

It carries out the reaction beta-D-fructose 1,6-bisphosphate = D-glyceraldehyde 3-phosphate + dihydroxyacetone phosphate. It participates in carbohydrate degradation; glycolysis; D-glyceraldehyde 3-phosphate and glycerone phosphate from D-glucose: step 4/4. The protein is Fructose-bisphosphate aldolase class 1 of Treponema denticola (strain ATCC 35405 / DSM 14222 / CIP 103919 / JCM 8153 / KCTC 15104).